The sequence spans 269 residues: Putative ankyrin repeat protein L23 (269 aa).

ANK repeat units follow at residues 118-147, 148-177, 179-207, 208-237, and 238-267; these read EDDY…DIKS, DGDY…DIRA, NDYA…NIRE, QNDY…DIRA, and DNDC…DIRA.

The sequence is that of Putative ankyrin repeat protein L23 from Acanthamoeba polyphaga (Amoeba).